Reading from the N-terminus, the 227-residue chain is Large ribosomal subunit protein uL10c (227 aa).

The N-terminal 47 residues, 1–47 (MEATFFTLPSSTSHSYPFSLKSHFNNSLTLPTHPHFKPKSKNLTIRS), are a transit peptide targeting the chloroplast.

Belongs to the universal ribosomal protein uL10 family. Part of the 50S ribosomal subunit.

The protein resides in the plastid. It is found in the chloroplast. Its function is as follows. This protein binds directly to 23S ribosomal RNA. This chain is Large ribosomal subunit protein uL10c (RPL10), found in Nicotiana tabacum (Common tobacco).